The sequence spans 292 residues: Protein LRATD1 (292 aa).

Position 38 is a phosphoserine (S38). One can recognise an LRAT domain in the interval 133–228; it reads PAPEPPAPAP…CRFGKREFKA (96 aa).

It belongs to the LRATD family. Only detected in testis. Highly expressed in colon cancer cells.

Its subcellular location is the cytoplasm. Functionally, may play a role in cell morphology and motility. The chain is Protein LRATD1 from Homo sapiens (Human).